We begin with the raw amino-acid sequence, 1292 residues long: Myosin-1 (1292 aa).

The region spanning 35–714 (VGVSDLTLLS…TLFALENMRD (680 aa)) is the Myosin motor domain. An ATP-binding site is contributed by 128-135 (GESGAGKT). A Phosphoserine modification is found at Ser356. The segment at 403 to 485 (SIGILDIYGF…PGIFAALNDS (83 aa)) is actin-binding. 2 IQ domains span residues 718-738 (HNMA…RIDS) and 739-764 (AIRI…YGNK). Positions 770 to 960 (KERRAMSLLG…TIMVRRGRPG (191 aa)) constitute a TH1 domain. Disordered regions lie at residues 956–991 (RGRP…GHPT), 1017–1180 (YSLN…FPLK), and 1227–1258 (PVAS…SAAT). Residues 1062–1081 (MDNSSAAYGNASALPNSAPS) are compositionally biased toward polar residues. Pro residues-rich tracts occupy residues 1087–1121 (ASRP…PMPR) and 1142–1155 (APPP…PPAA). The 63-residue stretch at 1157-1219 (PSEPVYEAAF…PTAYIVESKA (63 aa)) folds into the SH3 domain. Residues 1240–1258 (ATREAGTTSAATAAASAAT) are compositionally biased toward low complexity.

It belongs to the TRAFAC class myosin-kinesin ATPase superfamily. Myosin family. In terms of processing, phosphorylation of the TEDS site (Ser-356) is required for the polarization of the actin cytoskeleton. Phosphorylation probably activates the myosin-I ATPase activity.

The protein localises to the cytoplasm. It localises to the cytoskeleton. It is found in the actin patch. Its function is as follows. Type-I myosin implicated in the organization of the actin cytoskeleton. Required for proper actin cytoskeleton polarization. At the cell cortex, assembles in patch-like structures together with proteins from the actin-polymerizing machinery and promotes actin assembly. Functions as actin nucleation-promoting factor (NPF) for the Arp2/3 complex. This chain is Myosin-1 (MYO1), found in Eremothecium gossypii (strain ATCC 10895 / CBS 109.51 / FGSC 9923 / NRRL Y-1056) (Yeast).